The chain runs to 124 residues: Glucagon-1 (124 aa).

The signal sequence occupies residues 1–25 (MKRIHSLAGILLVLGLIQSSCRVLM). The segment at 28–54 (ADPSSSLEADSTLKDEPRELSNMKRHS) is disordered. The span at 38-54 (STLKDEPRELSNMKRHS) shows a compositional bias: basic and acidic residues. A propeptide spanning residues 84–88 (SGVAE) is cleaved from the precursor.

It belongs to the glucagon family.

Its subcellular location is the secreted. Its function is as follows. Glucagon plays a key role in glucose metabolism and homeostasis. Regulates blood glucose by increasing gluconeogenesis and decreasing glycolysis. This is Glucagon-1 (gcg1) from Lophius americanus (American angler).